The chain runs to 63 residues: Large ribosomal subunit protein bL28c (63 aa).

It belongs to the bacterial ribosomal protein bL28 family.

The protein localises to the plastid. It localises to the chloroplast. In Porphyra purpurea (Red seaweed), this protein is Large ribosomal subunit protein bL28c (rpl28).